An 87-amino-acid chain; its full sequence is UPF0512 protein B (87 aa).

The protein belongs to the UPF0512 family.

In Dictyostelium discoideum (Social amoeba), this protein is UPF0512 protein B.